We begin with the raw amino-acid sequence, 96 residues long: Protein C4 (96 aa).

The N-myristoyl glycine; by host moiety is linked to residue G2. The interval 66 to 96 (STDDLQGEDSRQPMTLTPRQLTQEVSRRLLM) is disordered. The span at 77 to 89 (QPMTLTPRQLTQE) shows a compositional bias: polar residues.

Belongs to the geminiviridae protein AC4/C4 family.

It is found in the host cell membrane. Its function is as follows. Pathogenicity determinant. May act as a suppressor of RNA-mediated gene silencing, also known as post-transcriptional gene silencing (PTGS), a mechanism of plant viral defense that limits the accumulation of viral RNAs. In Cynanchum acutum (Tomato), this protein is Protein C4.